The chain runs to 433 residues: Enolase (433 aa).

Position 167 (Q167) interacts with (2R)-2-phosphoglycerate. The active-site Proton donor is the E209. Residues D246, E287, and D314 each coordinate Mg(2+). (2R)-2-phosphoglycerate-binding residues include K339, R368, S369, and K390. Residue K339 is the Proton acceptor of the active site.

This sequence belongs to the enolase family. The cofactor is Mg(2+).

The protein resides in the cytoplasm. The protein localises to the secreted. Its subcellular location is the cell surface. It carries out the reaction (2R)-2-phosphoglycerate = phosphoenolpyruvate + H2O. It functions in the pathway carbohydrate degradation; glycolysis; pyruvate from D-glyceraldehyde 3-phosphate: step 4/5. In terms of biological role, catalyzes the reversible conversion of 2-phosphoglycerate (2-PG) into phosphoenolpyruvate (PEP). It is essential for the degradation of carbohydrates via glycolysis. This chain is Enolase, found in Prochlorococcus marinus (strain NATL2A).